Consider the following 540-residue polypeptide: FAD-binding monooxygenase lolF2 (540 aa).

FAD contacts are provided by residues 43–46 (VWRE) and 55–58 (DSLF). NADP(+)-binding positions include 53-55 (AVD), 182-188 (TGPSGVQ), and 205-206 (QS).

This sequence belongs to the FAD-binding monooxygenase family. FAD is required as a cofactor.

It participates in alkaloid biosynthesis. FAD-binding monooxygenase; part of the gene cluster that mediates the biosynthesis of loline alkaloids, potent insecticidal agents composed of a pyrrolizidine ring system and an uncommon ether bridge linking carbons 2 and 7. Lolines are structurally differentiated by the various modifications of the L-amino group and include norloline, loline, N-methylloline, N-acetylloline, N-acetylnorloline, and N-formylloline. The first committed step is the condensation of O-acetyl-L-homoserine (derived from L-aspartic acid) and L-proline, probably catalyzed by the gamma-type pyridoxal 5'-phosphate(PLP)-dependent enzyme lolC, to give the diamino diacid, NACPP. Ensuing cyclization, decarboxylation, and acetylation steps yield 1-exo-acetamidopyrrolizidine (AcAP). LolO is required for installation of the ether bridge upon the pathway intermediate, 1-exo-acetamidopyrrolizidine (AcAP). In sequential 2-oxoglutarate- and O(2)-consuming steps, lolO removes hydrogens from C2 and C7 of AcAP to form both carbon-oxygen bonds in N-acetylnorloline (NANL), the precursor to all other lolines. The enzymes lolD, lolE, lolF and lolT have also been proposed to be involved in the ether-bridge installation. Further processing of the exocyclic moiety of NANL by fungal N-acetamidase (LolN), methyltransferase (LolM), and cytochrome P450 (LolP) enzymes, with occasional involvement of a plant acetyltransferase, generates the other known lolines. LolN transforms NANL to norlonine which is monomethylated and dimethylated to respectively lonine and N-methyllonine (NML) by lolM. LolP catalyzes hydroxylation of the methyl group in N-methylloline (NML) and further oxygenation to N-formylloline (NFL). A plant acetyltransferase is responsible for the acetylation of loline to form N-acetylloline (NAL). LolA might interact with aspartate kinase to prevent feedback inhibition of its activity by these end products and thereby promote production of l-homoserine from l-aspartate. The chain is FAD-binding monooxygenase lolF2 from Epichloe uncinata (Endophyte fungus).